Here is a 271-residue protein sequence, read N- to C-terminus: Ribosomal RNA small subunit methyltransferase A (271 aa).

Residues His-11, Leu-13, Gly-38, Glu-58, Asp-86, and Asn-101 each contribute to the S-adenosyl-L-methionine site.

It belongs to the class I-like SAM-binding methyltransferase superfamily. rRNA adenine N(6)-methyltransferase family. RsmA subfamily.

Its subcellular location is the cytoplasm. The catalysed reaction is adenosine(1518)/adenosine(1519) in 16S rRNA + 4 S-adenosyl-L-methionine = N(6)-dimethyladenosine(1518)/N(6)-dimethyladenosine(1519) in 16S rRNA + 4 S-adenosyl-L-homocysteine + 4 H(+). In terms of biological role, specifically dimethylates two adjacent adenosines (A1518 and A1519) in the loop of a conserved hairpin near the 3'-end of 16S rRNA in the 30S particle. May play a critical role in biogenesis of 30S subunits. The polypeptide is Ribosomal RNA small subunit methyltransferase A (Helicobacter pylori (strain Shi470)).